The following is a 180-amino-acid chain: ATP-dependent protease subunit HslV (180 aa).

Thr8 is a catalytic residue. Residues Gly165, Asp168, and Thr171 each contribute to the Na(+) site.

Belongs to the peptidase T1B family. HslV subfamily. In terms of assembly, a double ring-shaped homohexamer of HslV is capped on each side by a ring-shaped HslU homohexamer. The assembly of the HslU/HslV complex is dependent on binding of ATP.

Its subcellular location is the cytoplasm. It carries out the reaction ATP-dependent cleavage of peptide bonds with broad specificity.. Allosterically activated by HslU binding. Functionally, protease subunit of a proteasome-like degradation complex believed to be a general protein degrading machinery. In Lactiplantibacillus plantarum (strain ATCC BAA-793 / NCIMB 8826 / WCFS1) (Lactobacillus plantarum), this protein is ATP-dependent protease subunit HslV.